The chain runs to 716 residues: Putative cuticle collagen 99 (716 aa).

Disordered stretches follow at residues 85-122 (LPSSDSNTDDDDVAKSRRVRNSCMCPAGPPGERGPVGP) and 183-472 (PPGP…SLVA). 3 triple-helical region regions span residues 179 to 238 (GMPG…KGDR), 265 to 298 (LPGPPGPPGPPGPAGRDGRHGLKGDRGLPGFDGE), and 302 to 330 (GPKGETGSPGRDGIPGARGPPGERGEKGD). A compositionally biased stretch (pro residues) spans 266–277 (PGPPGPPGPPGP). Over residues 280–290 (RDGRHGLKGDR) the composition is skewed to basic and acidic residues. Over residues 349 to 358 (PGPPGPPGPP) the composition is skewed to pro residues. Triple-helical region stretches follow at residues 385–411 (GPPGEKGERGERGEPGDRGLPGAAGAA) and 422–467 (GPPG…GRHG). Basic and acidic residues predominate over residues 389 to 401 (EKGERGERGEPGD). Over residues 402–422 (RGLPGAAGAANLLNGGKALVG) the composition is skewed to low complexity. The span at 429 to 444 (RDGRPGDKGEKGEQGL) shows a compositional bias: basic and acidic residues. N-linked (GlcNAc...) asparagine glycosylation occurs at Asn-474. The disordered stretch occupies residues 503 to 716 (KNVIPGPPGP…GAETRPPVTD (214 aa)). 3 triple-helical region regions span residues 507–557 (PGPP…QPGA), 566–603 (GPRGPPGLPGPPGEKGDLGPPGLPGQPGSLGLPGPPGP), and 605–664 (GLRG…PGLD). Residues 568–577 (RGPPGLPGPP) show a composition bias toward pro residues.

The protein belongs to the cuticular collagen family. Collagen polypeptide chains are complexed within the cuticle by disulfide bonds and other types of covalent cross-links.

Functionally, nematode cuticles are composed largely of collagen-like proteins. The cuticle functions both as an exoskeleton and as a barrier to protect the worm from its environment. In Caenorhabditis elegans, this protein is Putative cuticle collagen 99 (col-99).